The sequence spans 691 residues: Hormonally up-regulated neu tumor-associated kinase homolog A (691 aa).

The Protein kinase domain maps to 55–313 (YLIGRKLGEG…IQQALANRWL (259 aa)). Residues 61–69 (LGEGSFAKV) and Lys84 each bind ATP. Catalysis depends on Asp179, which acts as the Proton acceptor. Residues 406 to 425 (MNKNSYEERRSKDLEKRGEP) show a composition bias toward basic and acidic residues. 4 disordered regions span residues 406–475 (MNKN…GGLS), 499–518 (QSPD…HSQE), 580–640 (FQFD…SRGR), and 655–679 (QVVS…SPGY). Residues 440-453 (SHRQNACLTPQGHS) show a composition bias toward polar residues. Positions 457–470 (PVKERRSSKSERES) are enriched in basic and acidic residues. Polar residues predominate over residues 582–597 (FDNTSPSKSHFNQASF). Positions 604–620 (SPSSPESMSPTSPHSPS) are enriched in low complexity. Residues 621–631 (CNNNISGNLGS) show a composition bias toward polar residues.

This sequence belongs to the protein kinase superfamily. CAMK Ser/Thr protein kinase family. SNF1 subfamily.

The catalysed reaction is L-seryl-[protein] + ATP = O-phospho-L-seryl-[protein] + ADP + H(+). It catalyses the reaction L-threonyl-[protein] + ATP = O-phospho-L-threonyl-[protein] + ADP + H(+). This Xenopus laevis (African clawed frog) protein is Hormonally up-regulated neu tumor-associated kinase homolog A (hunk-a).